The chain runs to 1858 residues: Protein ROS1C (1858 aa).

Residues 347–356 (TEALKGEDAP) show a composition bias toward basic and acidic residues. Disordered stretches follow at residues 347-416 (TEAL…AEPF) and 1288-1309 (PDTA…KNSE). 2 stretches are compositionally biased toward basic residues: residues 360-370 (LKTRRRKHRPK) and 394-404 (KPKRKYVRKNR). Residues Cys-1492, Cys-1499, Cys-1502, and Cys-1508 each contribute to the [4Fe-4S] cluster site.

The protein belongs to the DNA glycosylase family. DEMETER subfamily. It depends on [4Fe-4S] cluster as a cofactor. As to expression, expressed in pistils and immature seeds. Expressed a low levels in roots, leaves and anthers.

The protein resides in the nucleus. Functionally, bifunctional DNA glycosylase/lyase, which excises 5-methylcytosine (5-meC) and 5-hydroxymethylcytosine (5-hmeC), leaving an apyrimidinic (AP) site that is subsequently incised by the lyase activity. Is responsible for the demethylation of methylated cytosine residues of Tos17 retrotransposon DNA. Demethylation of Tos17 cytosine residues promotes its transposition. May be involved in seed development. In Oryza sativa subsp. japonica (Rice), this protein is Protein ROS1C.